Reading from the N-terminus, the 508-residue chain is Photosystem II CP47 reaction center protein (508 aa).

A run of 6 helical transmembrane segments spans residues 21–36, 101–115, 140–156, 203–218, 237–252, and 457–472; these read AVHL…WAGS, ILLS…IWHW, GIHL…FGAF, IAAG…FHLS, VLSS…AFVV, and WFAL…HGAR.

The protein belongs to the PsbB/PsbC family. PsbB subfamily. PSII is composed of 1 copy each of membrane proteins PsbA, PsbB, PsbC, PsbD, PsbE, PsbF, PsbH, PsbI, PsbJ, PsbK, PsbL, PsbM, PsbT, PsbX, PsbY, PsbZ, Psb30/Ycf12, at least 3 peripheral proteins of the oxygen-evolving complex and a large number of cofactors. It forms dimeric complexes. Binds multiple chlorophylls. PSII binds additional chlorophylls, carotenoids and specific lipids. is required as a cofactor.

It localises to the plastid. Its subcellular location is the chloroplast thylakoid membrane. Functionally, one of the components of the core complex of photosystem II (PSII). It binds chlorophyll and helps catalyze the primary light-induced photochemical processes of PSII. PSII is a light-driven water:plastoquinone oxidoreductase, using light energy to abstract electrons from H(2)O, generating O(2) and a proton gradient subsequently used for ATP formation. The chain is Photosystem II CP47 reaction center protein from Nephroselmis olivacea (Green alga).